The chain runs to 1206 residues: Pre-mRNA-splicing factor prp12 (1206 aa).

Belongs to the RSE1 family. Belongs to the 40S cdc5-associated complex (or cwf complex), a spliceosome sub-complex reminiscent of a late-stage spliceosome composed of the U2, U5 and U6 snRNAs and at least brr2, cdc5, cwf2/prp3, cwf3/syf1, cwf4/syf3, cwf5/ecm2, spp42/cwf6, cwf7/spf27, cwf8, cwf9, cwf10, cwf11, cwf12, prp45/cwf13, cwf14, cwf15, cwf16, cwf17, cwf18, cwf19, cwf20, cwf21, cwf22, cwf23, cwf24, cwf25, cwf26, cyp7/cwf27, cwf28, cwf29/ist3, lea1, msl1, prp5/cwf1, prp10, prp12/sap130, prp17, prp22, sap61, sap62, sap114, sap145, slu7, smb1, smd1, smd3, smf1, smg1 and syf2.

It localises to the nucleus. In terms of biological role, involved in mRNA splicing and G2/M transition. This is Pre-mRNA-splicing factor prp12 (prp12) from Schizosaccharomyces pombe (strain 972 / ATCC 24843) (Fission yeast).